The primary structure comprises 114 residues: uncharacterized protein (114 aa).

The helical transmembrane segment at 13-30 threads the bilayer; sequence LYISAAGIASIYVVKTIV.

The protein localises to the mitochondrion outer membrane. This is an uncharacterized protein from Saccharomyces cerevisiae (strain ATCC 204508 / S288c) (Baker's yeast).